The chain runs to 309 residues: Malate dehydrogenase (309 aa).

Residues 6-11 (GSGRVG) and D31 contribute to the NAD(+) site. R80 and R86 together coordinate substrate. Residues N93 and 116 to 118 (TTN) each bind NAD(+). N118 and R149 together coordinate substrate. Residue H173 is the Proton acceptor of the active site.

Belongs to the LDH/MDH superfamily.

It catalyses the reaction (S)-malate + NAD(+) = oxaloacetate + NADH + H(+). Its function is as follows. Catalyzes the reversible oxidation of malate to oxaloacetate. In Pyrobaculum calidifontis (strain DSM 21063 / JCM 11548 / VA1), this protein is Malate dehydrogenase (mdh).